A 249-amino-acid polypeptide reads, in one-letter code: uncharacterized protein (249 aa).

Polar residues-rich tracts occupy residues 66–79 (NASLESGQSSTISP) and 92–119 (ASGSVSANKTFQSTESSALHQPKSSSSE). The interval 66–142 (NASLESGQSS…GPTSPRVTPG (77 aa)) is disordered.

The protein resides in the plastid. The protein localises to the chloroplast. This is an uncharacterized protein from Chlorella vulgaris (Green alga).